We begin with the raw amino-acid sequence, 288 residues long: Bifunctional protein FolD (288 aa).

NADP(+)-binding positions include 166–168 (GAS) and Ile-232.

The protein belongs to the tetrahydrofolate dehydrogenase/cyclohydrolase family. As to quaternary structure, homodimer.

The catalysed reaction is (6R)-5,10-methylene-5,6,7,8-tetrahydrofolate + NADP(+) = (6R)-5,10-methenyltetrahydrofolate + NADPH. The enzyme catalyses (6R)-5,10-methenyltetrahydrofolate + H2O = (6R)-10-formyltetrahydrofolate + H(+). The protein operates within one-carbon metabolism; tetrahydrofolate interconversion. In terms of biological role, catalyzes the oxidation of 5,10-methylenetetrahydrofolate to 5,10-methenyltetrahydrofolate and then the hydrolysis of 5,10-methenyltetrahydrofolate to 10-formyltetrahydrofolate. In Cronobacter sakazakii (strain ATCC BAA-894) (Enterobacter sakazakii), this protein is Bifunctional protein FolD.